The primary structure comprises 362 residues: Glutaminyl-peptide cyclotransferase (362 aa).

Positions 1 to 35 are cleaved as a signal peptide; that stretch reads MAGSEDKRVVGTLHLLLLQATVLSLTAGNLSLVSA. Residues Asn29 and Asn50 are each glycosylated (N-linked (GlcNAc...) asparagine). An intrachain disulfide couples Cys140 to Cys165. Asp160 provides a ligand contact to Zn(2+). Residue Glu202 is the Proton acceptor of the active site. Glu203 contributes to the Zn(2+) binding site. Asp249 serves as the catalytic Proton acceptor. His331 serves as a coordination point for Zn(2+).

Belongs to the glutaminyl-peptide cyclotransferase family.

It localises to the secreted. It catalyses the reaction N-terminal L-glutaminyl-[peptide] = N-terminal 5-oxo-L-prolyl-[peptide] + NH4(+). In terms of biological role, responsible for the biosynthesis of pyroglutamyl peptides. Has a bias against acidic and tryptophan residues adjacent to the N-terminal glutaminyl residue and a lack of importance of chain length after the second residue. This Mus musculus (Mouse) protein is Glutaminyl-peptide cyclotransferase (Qpct).